The primary structure comprises 221 residues: Sigma non-opioid intracellular receptor 1 (221 aa).

Residues methionine 1–tryptophan 4 are Lumenal-facing. The helical transmembrane segment at arginine 5 to leucine 27 threads the bilayer. Residues glycine 28 to phenylalanine 221 are Cytoplasmic-facing. Residues serine 96–leucine 103 are important for ligand-binding. The C-terminal hydrophobic region stretch occupies residues phenylalanine 174–phenylalanine 221.

Belongs to the ERG2 family. Homotrimer.

Its subcellular location is the nucleus inner membrane. It localises to the nucleus outer membrane. It is found in the nucleus envelope. The protein resides in the cytoplasmic vesicle. The protein localises to the endoplasmic reticulum membrane. Its subcellular location is the membrane. May function in lipid transport from the endoplasmic reticulum and be involved in a wide array of cellular functions probably through regulation of the biogenesis of lipid microdomains at the plasma membrane. May regulate calcium efflux at the endoplasmic reticulum. In Xenopus tropicalis (Western clawed frog), this protein is Sigma non-opioid intracellular receptor 1 (sigmar1).